The sequence spans 38 residues: Photosystem II reaction center protein L (38 aa).

A helical transmembrane segment spans residues S17–F37.

Belongs to the PsbL family. PSII is composed of 1 copy each of membrane proteins PsbA, PsbB, PsbC, PsbD, PsbE, PsbF, PsbH, PsbI, PsbJ, PsbK, PsbL, PsbM, PsbT, PsbX, PsbY, PsbZ, Psb30/Ycf12, at least 3 peripheral proteins of the oxygen-evolving complex and a large number of cofactors. It forms dimeric complexes.

The protein localises to the plastid. Its subcellular location is the chloroplast thylakoid membrane. In terms of biological role, one of the components of the core complex of photosystem II (PSII). PSII is a light-driven water:plastoquinone oxidoreductase that uses light energy to abstract electrons from H(2)O, generating O(2) and a proton gradient subsequently used for ATP formation. It consists of a core antenna complex that captures photons, and an electron transfer chain that converts photonic excitation into a charge separation. This subunit is found at the monomer-monomer interface and is required for correct PSII assembly and/or dimerization. This is Photosystem II reaction center protein L from Cedrus deodara (Deodar cedar).